The sequence spans 358 residues: DnaJ homolog subfamily B member 11 (358 aa).

The signal sequence occupies residues M1–A22. One can recognise a J domain in the interval D25 to G90. T188 is subject to Phosphothreonine. The N-linked (GlcNAc...) asparagine glycan is linked to N261.

As to quaternary structure, part of a large chaperone multiprotein complex comprising DNAJB11, HSP90B1, HSPA5, HYOU, PDIA2, PDIA4, PDIA6, PPIB, SDF2L1, UGGT1 and very small amounts of ERP29, but not, or at very low levels, CALR nor CANX. Binds to denatured substrates in an ATP-independent manner. Interacts via the J domain with HSPA5 in an ATP-dependent manner. In terms of processing, contains high-mannose Endo H-sensitive carbohydrates. Cys-169, Cys-171, Cys-193 and Cys-196 form intramolecular disulfide bonds. The preferential partner for each Cys is not known.

The protein localises to the endoplasmic reticulum lumen. Its function is as follows. As a co-chaperone for HSPA5 it is required for proper folding, trafficking or degradation of proteins. Binds directly to both unfolded proteins that are substrates for ERAD and nascent unfolded peptide chains, but dissociates from the HSPA5-unfolded protein complex before folding is completed. May help recruiting HSPA5 and other chaperones to the substrate. Stimulates HSPA5 ATPase activity. It is necessary for maturation and correct trafficking of PKD1. This is DnaJ homolog subfamily B member 11 (DNAJB11) from Bos taurus (Bovine).